A 526-amino-acid polypeptide reads, in one-letter code: Protein translocase subunit SecD (526 aa).

6 consecutive transmembrane segments (helical) span residues 8-28, 356-376, 379-399, 405-425, 453-473, and 478-498; these read LIVF…SLLE, IIAL…YYSM, VIAC…MAIF, LPGM…NIII, AIFD…AYGT, and GFAL…IIGT.

The protein belongs to the SecD/SecF family. SecD subfamily. Forms a complex with SecF. Part of the essential Sec protein translocation apparatus which comprises SecA, SecYEG and auxiliary proteins SecDF-YajC and YidC.

Its subcellular location is the cell inner membrane. Its function is as follows. Part of the Sec protein translocase complex. Interacts with the SecYEG preprotein conducting channel. SecDF uses the proton motive force (PMF) to complete protein translocation after the ATP-dependent function of SecA. The sequence is that of Protein translocase subunit SecD from Helicobacter pylori (strain J99 / ATCC 700824) (Campylobacter pylori J99).